The chain runs to 303 residues: Kynurenine formamidase (303 aa).

Positions 95 to 99 (HGGYW) match the HGGXW motif. The Nucleophile role is filled by S164. Catalysis depends on residues D247 and H279.

It belongs to the kynurenine formamidase family. As to quaternary structure, homodimer.

Its subcellular location is the cytoplasm. It localises to the cytosol. The protein resides in the nucleus. It carries out the reaction N-formyl-L-kynurenine + H2O = L-kynurenine + formate + H(+). The protein operates within amino-acid degradation; L-tryptophan degradation via kynurenine pathway; L-kynurenine from L-tryptophan: step 2/2. Catalyzes the hydrolysis of N-formyl-L-kynurenine to L-kynurenine, the second step in the kynurenine pathway of tryptophan degradation. Kynurenine may be further oxidized to nicotinic acid, NAD(H) and NADP(H). Required for elimination of toxic metabolites. This chain is Kynurenine formamidase, found in Homo sapiens (Human).